The sequence spans 320 residues: ATP-dependent 6-phosphofructokinase (320 aa).

Gly12 is a binding site for ATP. ADP-binding positions include 22–26 (RGVVR) and 55–60 (RYSVSD). ATP contacts are provided by residues 73–74 (RF) and 103–106 (GDGS). Asp104 contacts Mg(2+). 126-128 (TID) is a binding site for substrate. Residue Asp128 is the Proton acceptor of the active site. Residue Arg155 participates in ADP binding. Substrate-binding positions include Arg163 and 170–172 (MGR). ADP contacts are provided by residues 186–188 (GCE), Lys212, and 214–216 (KKH). Residues Glu223, Arg244, and 250-253 (HIQR) contribute to the substrate site.

This sequence belongs to the phosphofructokinase type A (PFKA) family. ATP-dependent PFK group I subfamily. Prokaryotic clade 'B1' sub-subfamily. In terms of assembly, homotetramer. Requires Mg(2+) as cofactor.

The protein resides in the cytoplasm. The catalysed reaction is beta-D-fructose 6-phosphate + ATP = beta-D-fructose 1,6-bisphosphate + ADP + H(+). It participates in carbohydrate degradation; glycolysis; D-glyceraldehyde 3-phosphate and glycerone phosphate from D-glucose: step 3/4. Its activity is regulated as follows. Allosterically activated by ADP and other diphosphonucleosides, and allosterically inhibited by phosphoenolpyruvate. Functionally, catalyzes the phosphorylation of D-fructose 6-phosphate to fructose 1,6-bisphosphate by ATP, the first committing step of glycolysis. This is ATP-dependent 6-phosphofructokinase from Cronobacter sakazakii (strain ATCC BAA-894) (Enterobacter sakazakii).